Here is a 778-residue protein sequence, read N- to C-terminus: Kin of IRRE-like protein 3 (778 aa).

The N-terminal stretch at 1–21 (MRPFQLDLLFLCFFLFSQELG) is a signal peptide. Residues 22 to 535 (LQKRGCCLVL…GLEAESVPMA (514 aa)) lie on the Extracellular side of the membrane. Ig-like C2-type domains are found at residues 48-142 (YSFS…ARLT), 147-243 (PDDP…TSVT), 249-330 (PPLV…RTVD), 335-415 (PRMT…VTLT), and 419-515 (PPII…IRLK). Cys-69 and Cys-127 are oxidised to a cystine. Asn-167 is a glycosylation site (N-linked (GlcNAc...) asparagine). The cysteines at positions 170 and 227 are disulfide-linked. The N-linked (GlcNAc...) asparagine glycan is linked to Asn-253. Cys-271 and Cys-314 form a disulfide bridge. An N-linked (GlcNAc...) asparagine glycan is attached at Asn-324. Intrachain disulfides connect Cys-356–Cys-398 and Cys-440–Cys-499. Asn-498 is a glycosylation site (N-linked (GlcNAc...) asparagine). The helical transmembrane segment at 536–556 (VIIGVAVGAGVAFLVLMATIV) threads the bilayer. Over 557-778 (AFCCARSQRN…PLQRRMQTHV (222 aa)) the chain is Cytoplasmic. Residues 727–736 (CDSSVSSSGK) show a composition bias toward polar residues. Residues 727 to 778 (CDSSVSSSGKQDGYVQFDKASKASASSSHHSQSSSQNSDPSRPLQRRMQTHV) form a disordered region. A compositionally biased stretch (low complexity) spans 748-762 (KASASSSHHSQSSSQ).

It belongs to the immunoglobulin superfamily. Homodimer; mediates homophilic interactions to promote cell adhesion. Interacts with NPHS1; forms heterodimers with NPHS1. Interacts with NPHS2/podocin (via the C-terminus). Interacts with CASK. Interacts (via extracellular region) with MAP1B. Interacts (via extracellular region) with MYO16. Interacts (via intracellular region) with ATP1B1. Interacts (via intracellular region) with SHMT2. Interacts (via intracellular region) with UFC1. In terms of processing, undergoes proteolysis by a metalloprotease and gives rise to a soluble form. In terms of tissue distribution, expressed mainly in adult brain, bone marrow and stromal cells. Expressed in diverse regions of the brain, including the cortex, hippocampus, striatum, olfactory bulb and cerebellum. In brain, expressed in pontine nucleus neurons (at protein level). In hippocampus, produced in both the dentate granule neurons and the GABAergic neurons, but not the CA3 neurons. Expressed in subpopulations of vomeronasal sensory neurons. Expressed in a subset of neurons in dorsal root ganglia.

Its subcellular location is the cell membrane. The protein resides in the cell projection. It is found in the axon. It localises to the dendrite. The protein localises to the secreted. In terms of biological role, synaptic adhesion molecule required for the formation of target-specific synapses. Required for formation of target-specific synapses at hippocampal mossy fiber synapses. Required for formation of mossy fiber filopodia, the synaptic structures connecting dentate granule and GABA neurons. Probably acts as a homophilic adhesion molecule that promotes trans-cellular interactions and stabilize mossy fiber filipodia contact and subsequent synapse formation. Required for the coalescence of vomeronasal sensory neuron axons. May be involved in the hematopoietic supportive capacity of stroma cells; the secreted extracellular domain is directly responsible for supporting hematopoietic stem cells. This Mus musculus (Mouse) protein is Kin of IRRE-like protein 3 (Kirrel3).